Reading from the N-terminus, the 172-residue chain is Secretory-abundant heat soluble protein 64681 (172 aa).

The N-terminal stretch at 1–19 (MSRTIVALILLGLAALAAA) is a signal peptide. Residues 30–59 (EWAGKAWLGKWVSTDRSENWDAFVEALGLP) are SAHS-c1. Residues 74–102 (WKEGDHYHHQIIIADKSYKQDIQFKLGEE) form an SAHS-c2 region. Residues Asn108 and Asn133 are each glycosylated (N-linked (GlcNAc...) asparagine). Positions 115–164 (KYTEVGDNLQNEVKIPSKNKTISDSYVVKGDELEKTYKINDVVAKRWYKK) are SAHS-c3.

The protein belongs to the Secretory-abundant heat soluble protein (SAHS) family.

The protein localises to the secreted. Secreted heat soluble protein acting as a molecular shield in water-deficient condition. Tardigrade-specific intrinsically disordered proteins (TDPs) are essential for desiccation tolerance by forming non-crystalline amorphous solids upon desiccation, and this vitrified state mirrors their protective capabilities. The chain is Secretory-abundant heat soluble protein 64681 from Hypsibius exemplaris (Freshwater tardigrade).